We begin with the raw amino-acid sequence, 94 residues long: CRISPR-associated endoribonuclease Cas2 (94 aa).

Residue Asp-11 coordinates Mg(2+).

The protein belongs to the CRISPR-associated endoribonuclease Cas2 protein family. In terms of assembly, homodimer, forms a heterotetramer with a Cas1 homodimer. Mg(2+) is required as a cofactor.

Functionally, CRISPR (clustered regularly interspaced short palindromic repeat), is an adaptive immune system that provides protection against mobile genetic elements (viruses, transposable elements and conjugative plasmids). CRISPR clusters contain sequences complementary to antecedent mobile elements and target invading nucleic acids. CRISPR clusters are transcribed and processed into CRISPR RNA (crRNA). Functions as a ssRNA-specific endoribonuclease. Involved in the integration of spacer DNA into the CRISPR cassette. This Thermus thermophilus (strain ATCC 27634 / DSM 579 / HB8) protein is CRISPR-associated endoribonuclease Cas2.